Consider the following 275-residue polypeptide: uncharacterized protein (275 aa).

Its subcellular location is the virion. This is an uncharacterized protein from Acanthamoeba polyphaga (Amoeba).